The chain runs to 1611 residues: Non-structural polyprotein 1AB (1611 aa).

Positions 124 to 187 (TTSNLIARAM…ELHLLKELGK (64 aa)) form a coiled coil. The next 7 membrane-spanning stretches (helical) occupy residues 195-215 (AFSFFDWLFMAVVFFLFLHYT), 329-348 (ISYYKLDALVTFAFSAALAT), 353-373 (MVMVLPLLLVALYLNVPPITV), 375-395 (IASVIFQPLILPFVGFQLVFP), 397-417 (FLPYNLFVAWVWMVCQAFFSS), 426-446 (VSTALVQVVFLAVWSISVIVL), and 450-470 (SIPMVAQILLFVATLTVSVGV). Residues His-550, Asp-582, and Ser-647 each act as charge relay system; for serine protease activity in the active site. At Tyr-833 the chain carries O-(5'-phospho-RNA)-tyrosine. Residues 1352–1486 (RYYVELDWTR…AVDKRFINSY (135 aa)) enclose the RdRp catalytic domain.

The protein belongs to the astroviridae polyprotein 1AB family. In terms of assembly, monomer. In terms of processing, cleaved by the viral and host proteases. The protease is probably autocatalytically cleaved.

It is found in the host membrane. The catalysed reaction is RNA(n) + a ribonucleoside 5'-triphosphate = RNA(n+1) + diphosphate. Functionally, responsible for the cleavage of the polyprotein into functional products. Protein covalently attached to the 5' extremity of the genomic and subgenomic RNAs. It may serve as a primer for the replicase. The polypeptide is Non-structural polyprotein 1AB (ORF1) (Turkey astrovirus 1 (TAstV-1)).